The sequence spans 342 residues: P21 prophage-derived major head protein (342 aa).

Belongs to the lambda phage major capsid protein family.

The protein is P21 prophage-derived major head protein of Escherichia coli O6:H1 (strain CFT073 / ATCC 700928 / UPEC).